The sequence spans 960 residues: RasGEF domain-containing serine/threonine-protein kinase X (960 aa).

One can recognise a Protein kinase domain in the interval 21 to 274 (LEFNEKIGKG…FDEILSQLKV (254 aa)). ATP-binding positions include 27–35 (IGKGSFGSV) and Lys-48. Asp-140 acts as the Proton acceptor in catalysis. Over residues 314 to 368 (NISFSPNNSNNNNNNNNNISNISPDITTGIQQINLSSSGGSNNSSPSTPPQGSQL) the composition is skewed to low complexity. 2 disordered regions span residues 314–372 (NISF…VSLA) and 393–413 (GQLS…HKPS). Residues 437–565 (PCYAALTSHI…LGTTISNNEL (129 aa)) form the N-terminal Ras-GEF domain. The interval 596-651 (NNNNNNNNNPVNNINNINNNNSVNSSSSNNNNNNNNNNSNNNNNNNNNNNNNNNNN) is disordered. The region spanning 712–957 (HSTELARQIT…KNNSLKCEPP (246 aa)) is the Ras-GEF domain.

This sequence belongs to the protein kinase superfamily. TKL Ser/Thr protein kinase family.

It catalyses the reaction L-seryl-[protein] + ATP = O-phospho-L-seryl-[protein] + ADP + H(+). The enzyme catalyses L-threonyl-[protein] + ATP = O-phospho-L-threonyl-[protein] + ADP + H(+). Promotes the exchange of Ras-bound GDP by GTP. In Dictyostelium discoideum (Social amoeba), this protein is RasGEF domain-containing serine/threonine-protein kinase X (gefX).